The sequence spans 152 residues: Large ribosomal subunit protein bL9 (152 aa).

This sequence belongs to the bacterial ribosomal protein bL9 family.

Functionally, binds to the 23S rRNA. This chain is Large ribosomal subunit protein bL9, found in Coxiella burnetii (strain Dugway 5J108-111).